A 314-amino-acid chain; its full sequence is Melanoma-associated antigen 12 (314 aa).

Basic and acidic residues predominate over residues 1–14 (MPLEQRSQHCKPEE). Positions 1–72 (MPLEQRSQHC…HSPQGASTLP (72 aa)) are disordered. Low complexity predominate over residues 17–44 (EAQGEALGLVGAQAPATEEQETASSSST). The 200-residue stretch at 109 to 308 (LSRKMAELVH…ISYPPLHEWA (200 aa)) folds into the MAGE domain.

As to expression, expressed in many tumors of several types, such as melanoma, head and neck squamous cell carcinoma, lung carcinoma and breast carcinoma, but not in normal tissues except for testes.

Its function is as follows. Not known, though may play a role tumor transformation or progression. In vitro promotes cell viability in melanoma cell lines. The protein is Melanoma-associated antigen 12 (MAGEA12) of Homo sapiens (Human).